A 322-amino-acid polypeptide reads, in one-letter code: NADH-quinone oxidoreductase subunit H (322 aa).

8 helical membrane-spanning segments follow: residues 12–32 (IGKA…MSFI), 79–99 (IFVL…AVVP), 111–131 (VGLL…LFAG), 151–171 (LSYE…TGSF), 183–203 (LWNV…GVAV), 234–254 (FFVG…TLFF), 262–282 (LPPF…FILL), and 301–321 (VCLP…LMNA).

This sequence belongs to the complex I subunit 1 family. As to quaternary structure, NDH-1 is composed of 14 different subunits. Subunits NuoA, H, J, K, L, M, N constitute the membrane sector of the complex.

It localises to the cell inner membrane. It carries out the reaction a quinone + NADH + 5 H(+)(in) = a quinol + NAD(+) + 4 H(+)(out). Its function is as follows. NDH-1 shuttles electrons from NADH, via FMN and iron-sulfur (Fe-S) centers, to quinones in the respiratory chain. The immediate electron acceptor for the enzyme in this species is believed to be ubiquinone. Couples the redox reaction to proton translocation (for every two electrons transferred, four hydrogen ions are translocated across the cytoplasmic membrane), and thus conserves the redox energy in a proton gradient. This subunit may bind ubiquinone. The sequence is that of NADH-quinone oxidoreductase subunit H from Aeromonas hydrophila subsp. hydrophila (strain ATCC 7966 / DSM 30187 / BCRC 13018 / CCUG 14551 / JCM 1027 / KCTC 2358 / NCIMB 9240 / NCTC 8049).